A 207-amino-acid polypeptide reads, in one-letter code: Holliday junction branch migration complex subunit RuvA (207 aa).

Positions 1–71 (MIVSIAGKLV…RLTPRLIGFS (71 aa)) are domain I. Residues 72–149 (TLPERQFFDL…RFALMVAGGE (78 aa)) form a domain II region. Residues 150–155 (VADAME) are flexible linker. Positions 156-207 (VESPIVSDTYDALVTLGHSESDARKLIDETLATGKKFKDTESLLTAIYQRSK) are domain III.

Belongs to the RuvA family. As to quaternary structure, homotetramer. Forms an RuvA(8)-RuvB(12)-Holliday junction (HJ) complex. HJ DNA is sandwiched between 2 RuvA tetramers; dsDNA enters through RuvA and exits via RuvB. An RuvB hexamer assembles on each DNA strand where it exits the tetramer. Each RuvB hexamer is contacted by two RuvA subunits (via domain III) on 2 adjacent RuvB subunits; this complex drives branch migration. In the full resolvosome a probable DNA-RuvA(4)-RuvB(12)-RuvC(2) complex forms which resolves the HJ.

Its subcellular location is the cytoplasm. Functionally, the RuvA-RuvB-RuvC complex processes Holliday junction (HJ) DNA during genetic recombination and DNA repair, while the RuvA-RuvB complex plays an important role in the rescue of blocked DNA replication forks via replication fork reversal (RFR). RuvA specifically binds to HJ cruciform DNA, conferring on it an open structure. The RuvB hexamer acts as an ATP-dependent pump, pulling dsDNA into and through the RuvAB complex. HJ branch migration allows RuvC to scan DNA until it finds its consensus sequence, where it cleaves and resolves the cruciform DNA. This Rhodopirellula baltica (strain DSM 10527 / NCIMB 13988 / SH1) protein is Holliday junction branch migration complex subunit RuvA.